The chain runs to 199 residues: uncharacterized protein (199 aa).

A signal peptide spans 1–23 (MSARAPKELRLALPPCLLNRTFA). N-linked (GlcNAc...) asparagine glycosylation is found at Asn-19 and Asn-26. Residues 24–60 (SHNASGGSSAGLRSSGAGGGTCITQVGQQLFQSFSST) lie on the Extracellular side of the membrane. The chain crosses the membrane as a helical span at residues 61–81 (LVLIVLVTLIFCLLVLSLSTF). Topologically, residues 82–199 (HIHKRRMKKR…EGLLQTVVLS (118 aa)) are cytoplasmic. Residues 93–190 (MQRAQEEYER…ASSCLDTPGE (98 aa)) form a disordered region. Composition is skewed to basic and acidic residues over residues 95-106 (RAQEEYERDHCS) and 124-135 (HGKETRLERQPR). The segment covering 147–163 (SSSSSSSSSPGLLCQGP) has biased composition (low complexity). The segment covering 164 to 176 (CAPPPPLPAPTPQ) has biased composition (pro residues).

It is found in the membrane. This is an uncharacterized protein from Mus musculus (Mouse).